We begin with the raw amino-acid sequence, 287 residues long: Nucleotide-binding protein Ajs_0902 (287 aa).

10-17 (GMSGSGKS) serves as a coordination point for ATP. Residue 59–62 (DVRS) coordinates GTP.

This sequence belongs to the RapZ-like family.

In terms of biological role, displays ATPase and GTPase activities. This chain is Nucleotide-binding protein Ajs_0902, found in Acidovorax sp. (strain JS42).